We begin with the raw amino-acid sequence, 178 residues long: uncharacterized protein (178 aa).

2 helical membrane-spanning segments follow: residues 6 to 26 (AIFG…VSGL) and 154 to 174 (KELV…AMLI).

Its subcellular location is the cell membrane. This is an uncharacterized protein from Methanocaldococcus jannaschii (strain ATCC 43067 / DSM 2661 / JAL-1 / JCM 10045 / NBRC 100440) (Methanococcus jannaschii).